Consider the following 159-residue polypeptide: Protein-export protein SecB (159 aa).

The protein belongs to the SecB family. In terms of assembly, homotetramer, a dimer of dimers. One homotetramer interacts with 1 SecA dimer.

Its subcellular location is the cytoplasm. Functionally, one of the proteins required for the normal export of preproteins out of the cell cytoplasm. It is a molecular chaperone that binds to a subset of precursor proteins, maintaining them in a translocation-competent state. It also specifically binds to its receptor SecA. The protein is Protein-export protein SecB of Aromatoleum aromaticum (strain DSM 19018 / LMG 30748 / EbN1) (Azoarcus sp. (strain EbN1)).